A 396-amino-acid polypeptide reads, in one-letter code: NADH-quinone oxidoreductase subunit D (396 aa).

The protein belongs to the complex I 49 kDa subunit family. As to quaternary structure, NDH-1 is composed of 14 different subunits. Subunits NuoB, C, D, E, F, and G constitute the peripheral sector of the complex.

It is found in the cell inner membrane. The enzyme catalyses a quinone + NADH + 5 H(+)(in) = a quinol + NAD(+) + 4 H(+)(out). Its function is as follows. NDH-1 shuttles electrons from NADH, via FMN and iron-sulfur (Fe-S) centers, to quinones in the respiratory chain. The immediate electron acceptor for the enzyme in this species is believed to be ubiquinone. Couples the redox reaction to proton translocation (for every two electrons transferred, four hydrogen ions are translocated across the cytoplasmic membrane), and thus conserves the redox energy in a proton gradient. This chain is NADH-quinone oxidoreductase subunit D, found in Rhodopseudomonas palustris (strain BisA53).